The primary structure comprises 309 residues: MSNDSSGSEWELYRYTPSKGAAIALTVLFIVTTLIYSLQVVWDARKASKPEVDNPFDTPVDKCESITAISLGENYKKLTVRSTFSAFIPLFFGCIMEIVGYIARAVSSSNTKEIAPYVIQAVLLLIAPALYAATIYMLFGRLLHVMRCESLMIVSSRFGTSFFVFGDVVSFCLQAAGGGLMATVNGRTTGSNLITAGLVIQIVFFGVFIINEFRFSYSVARVCPFYRHISKKWWFLNLTLMLSSILIMVRSIVRLVEFVEGYDGFIISHEYFIYVFDAVPMLLAAIVFIVGSFFGNIFTTITECQSLKP.

7 consecutive transmembrane segments (helical) span residues 22–42 (AIAL…QVVW), 83–103 (TFSA…GYIA), 119–139 (IQAV…YMLF), 162–182 (FFVF…GLMA), 193–213 (LITA…INEF), 233–253 (WWFL…RSIV), and 278–298 (AVPM…GNIF).

Belongs to the lipid-translocating exporter (LTE) (TC 9.A.26.1) family.

Its subcellular location is the membrane. Its function is as follows. Confers resistance to molasses (to a particular toxic element present in some molasses). The polypeptide is Protein RTM1 (RTM1) (Saccharomyces cerevisiae (Baker's yeast)).